The primary structure comprises 231 residues: Large ribosomal subunit protein uL1 (231 aa).

It belongs to the universal ribosomal protein uL1 family. Part of the 50S ribosomal subunit.

Its function is as follows. Binds directly to 23S rRNA. The L1 stalk is quite mobile in the ribosome, and is involved in E site tRNA release. In terms of biological role, protein L1 is also a translational repressor protein, it controls the translation of the L11 operon by binding to its mRNA. This chain is Large ribosomal subunit protein uL1, found in Cupriavidus pinatubonensis (strain JMP 134 / LMG 1197) (Cupriavidus necator (strain JMP 134)).